The following is a 513-amino-acid chain: Fumarate reductase (513 aa).

41–55 (AIVIGGGLAGLSATN) is an FAD binding site. Residue serine 100 is modified to Phosphoserine. Residues histidine 288 and arginine 311 contribute to the active site.

The protein belongs to the FAD-dependent oxidoreductase 2 family. FRD/SDH subfamily. It depends on FAD as a cofactor.

The protein localises to the cytoplasm. The protein resides in the mitochondrion. Its subcellular location is the nucleus. The catalysed reaction is succinate + NAD(+) = fumarate + NADH + H(+). In terms of biological role, irreversibly catalyzes the reduction of fumarate to succinate. The polypeptide is Fumarate reductase (osm1) (Schizosaccharomyces pombe (strain 972 / ATCC 24843) (Fission yeast)).